A 1235-amino-acid chain; its full sequence is UPF0507 protein DEHA2G04334g (1235 aa).

A VPS9 domain is found at 323 to 487 (QNDDSDAIKI…LSSSMNDEPQ (165 aa)). Positions 1097 to 1124 (STTEADTTDTTDATDATHASPNLANSTN) are disordered. The span at 1100 to 1115 (EADTTDTTDATDATHA) shows a compositional bias: low complexity.

The protein belongs to the UPF0507 family.

The chain is UPF0507 protein DEHA2G04334g from Debaryomyces hansenii (strain ATCC 36239 / CBS 767 / BCRC 21394 / JCM 1990 / NBRC 0083 / IGC 2968) (Yeast).